Consider the following 252-residue polypeptide: Protein GrpE (252 aa).

The segment covering 1-22 (MHNPQSRGHNLSQAMSDQTVTN) has biased composition (polar residues). The interval 1 to 70 (MHNPQSRGHN…EEDQASEATS (70 aa)) is disordered.

The protein belongs to the GrpE family. As to quaternary structure, homodimer.

It localises to the cytoplasm. Participates actively in the response to hyperosmotic and heat shock by preventing the aggregation of stress-denatured proteins, in association with DnaK and GrpE. It is the nucleotide exchange factor for DnaK and may function as a thermosensor. Unfolded proteins bind initially to DnaJ; upon interaction with the DnaJ-bound protein, DnaK hydrolyzes its bound ATP, resulting in the formation of a stable complex. GrpE releases ADP from DnaK; ATP binding to DnaK triggers the release of the substrate protein, thus completing the reaction cycle. Several rounds of ATP-dependent interactions between DnaJ, DnaK and GrpE are required for fully efficient folding. The polypeptide is Protein GrpE (Thermosynechococcus vestitus (strain NIES-2133 / IAM M-273 / BP-1)).